A 187-amino-acid polypeptide reads, in one-letter code: Hypoxanthine/guanine phosphoribosyltransferase (187 aa).

This sequence belongs to the purine/pyrimidine phosphoribosyltransferase family. Archaeal HPRT subfamily. As to quaternary structure, homodimer.

It localises to the cytoplasm. It carries out the reaction IMP + diphosphate = hypoxanthine + 5-phospho-alpha-D-ribose 1-diphosphate. The catalysed reaction is GMP + diphosphate = guanine + 5-phospho-alpha-D-ribose 1-diphosphate. It functions in the pathway purine metabolism; IMP biosynthesis via salvage pathway; IMP from hypoxanthine: step 1/1. In terms of biological role, catalyzes a salvage reaction resulting in the formation of IMP that is energically less costly than de novo synthesis. The polypeptide is Hypoxanthine/guanine phosphoribosyltransferase (Methanopyrus kandleri (strain AV19 / DSM 6324 / JCM 9639 / NBRC 100938)).